Reading from the N-terminus, the 491-residue chain is Glutamate--tRNA ligase (491 aa).

The short motif at 10–20 (PSPTGYLHIGG) is the 'HIGH' region element. The short motif at 243–247 (KISKR) is the 'KMSKS' region element. K246 lines the ATP pocket.

This sequence belongs to the class-I aminoacyl-tRNA synthetase family. Glutamate--tRNA ligase type 1 subfamily. As to quaternary structure, monomer.

The protein resides in the cytoplasm. It catalyses the reaction tRNA(Glu) + L-glutamate + ATP = L-glutamyl-tRNA(Glu) + AMP + diphosphate. Catalyzes the attachment of glutamate to tRNA(Glu) in a two-step reaction: glutamate is first activated by ATP to form Glu-AMP and then transferred to the acceptor end of tRNA(Glu). This chain is Glutamate--tRNA ligase, found in Desulfotalea psychrophila (strain LSv54 / DSM 12343).